The primary structure comprises 513 residues: Probable E3 ubiquitin-protein ligase XBOS34 (513 aa).

3 ANK repeats span residues glutamate 39–alanine 69, tyrosine 75–isoleucine 104, and aspartate 108–glycine 137. Composition is skewed to polar residues over residues isoleucine 309–asparagine 327 and serine 335–asparagine 355. 2 disordered regions span residues isoleucine 309–threonine 378 and serine 423–glycine 455. Residues glycine 361–threonine 378 are compositionally biased toward low complexity. Positions alanine 436 to glutamate 446 are enriched in basic and acidic residues. Residues cysteine 462–arginine 501 form an RING-type zinc finger.

The catalysed reaction is S-ubiquitinyl-[E2 ubiquitin-conjugating enzyme]-L-cysteine + [acceptor protein]-L-lysine = [E2 ubiquitin-conjugating enzyme]-L-cysteine + N(6)-ubiquitinyl-[acceptor protein]-L-lysine.. It participates in protein modification; protein ubiquitination. The chain is Probable E3 ubiquitin-protein ligase XBOS34 (XBOS34) from Oryza sativa subsp. japonica (Rice).